The following is a 716-amino-acid chain: DNA replication licensing factor MCM7 (716 aa).

The C4-type zinc-finger motif lies at Cys-178 to Cys-205. Positions Ile-326–His-531 constitute an MCM domain. Gly-376–Ser-383 is a binding site for ATP. The Arginine finger signature appears at Ser-508 to Asp-511.

Belongs to the MCM family. In terms of assembly, component of the minichromosome maintenance (MCM) complex, a heterotetramer composed of MCM2, MCM3, MCM4, MCM5, MCM6 and MCM7. Interacts with ETG1. Expressed in shoot apex and flower buds.

Its subcellular location is the nucleus. It localises to the cytoplasm. The enzyme catalyses ATP + H2O = ADP + phosphate + H(+). Functionally, probable component of the MCM2-7 complex (MCM complex) that may function as a DNA helicase and which is essential to undergo a single round of replication initiation and elongation per cell cycle in eukaryotic cells. Required for megagametophyte and embryo development. This chain is DNA replication licensing factor MCM7 (MCM7), found in Arabidopsis thaliana (Mouse-ear cress).